The primary structure comprises 782 residues: Hypersensitive to pore-forming toxin protein 40 (782 aa).

One can recognise a Tudor; degenerate domain in the interval 138–203 (ESEIVPGAMY…TLFVSDQFSI (66 aa)). Composition is skewed to polar residues over residues 332–346 (SVNPVASSHPTSSSM) and 413–443 (FESTKSDISPQNNQNVEETSTPTVPPNSTIQ). Disordered regions lie at residues 332-351 (SVNPVASSHPTSSSMDDCPY), 413-448 (FESTKSDISPQNNQNVEETSTPTVPPNSTIQENEED), 472-492 (IERPNTPLPTSSKNSEHNMSE), and 617-672 (VAQG…LEDP). Residues 617–634 (VAQGSNAPKTAPNDSVNS) show a composition bias toward polar residues. Residues 638–662 (DDIHETDKRGNHCKSVTEDPKDNKD) are compositionally biased toward basic and acidic residues.

It is found in the cytoplasm. The protein localises to the perinuclear region. The chain is Hypersensitive to pore-forming toxin protein 40 from Caenorhabditis elegans.